Here is a 330-residue protein sequence, read N- to C-terminus: 5'-AMP-activated protein kinase subunit gamma-1 (330 aa).

The span at 1–12 shows a compositional bias: low complexity; it reads MESVAAESAPAP. Positions 1-25 are disordered; it reads MESVAAESAPAPENEHSQETPESNS. CBS domains follow at residues 42 to 102, 124 to 186, and 197 to 259; these read PTSS…KSAL, SFKP…PKPE, and IGTY…NLDV. ADP is bound by residues Arg-69, 84 to 89, Val-129, 150 to 151, and Lys-169; these read MLTITD and HR. AMP is bound by residues Arg-69, 84-89, Val-129, His-150, 150-151, Lys-169, Thr-199, Ala-204, 225-226, and 241-244; these read MLTITD, HR, SA, and SKFD. Residues Arg-69, 84 to 89, Val-129, 150 to 151, Arg-151, and Lys-169 contribute to the ATP site; these read MLTITD and HR. The AMPK pseudosubstrate motif lies at 137 to 158; that stretch reads LFDAVSSLIRNKIHRLPVIDPE. 241–244 serves as a coordination point for ADP; that stretch reads SKFD. 241–244 serves as a coordination point for ATP; it reads SKFD. At Ser-260 the chain carries Phosphoserine; by ULK1. Position 262 is a phosphothreonine; by ULK1 (Thr-262). Arg-268 is a binding site for ADP. Arg-268 is a binding site for AMP. Arg-268 contributes to the ATP binding site. Ser-269 is modified (phosphoserine; by ULK1). The region spanning 271 to 328 is the CBS 4 domain; the sequence is YFEGVLKCYLHETLEAIINRLVEAEVHRLVVVDEHDVVKGIVSLSDILQALVLTGGEK. ADP contacts are provided by residues Leu-276 and 297-298; that span reads HR. AMP is bound by residues Leu-276, His-297, 297 to 298, and 313 to 316; these read HR and SLSD. ATP is bound by residues Leu-276 and 297-298; that span reads HR.

The protein belongs to the 5'-AMP-activated protein kinase gamma subunit family. AMPK is a heterotrimer of an alpha catalytic subunit (PRKAA1 or PRKAA2), a beta (PRKAB1 or PRKAB2) and a gamma non-catalytic subunits (PRKAG1, PRKAG2 or PRKAG3). Interacts with FNIP1 and FNIP2. Post-translationally, phosphorylated by ULK1 and ULK2; leading to negatively regulate AMPK activity and suggesting the existence of a regulatory feedback loop between ULK1, ULK2 and AMPK. There is some ambiguity for a phosphosite: Ser-260/Thr-262. In terms of processing, glycosylated; O-GlcNAcylated by OGT, promoting the AMP-activated protein kinase (AMPK) activity. As to expression, highly expressed in heart and brain, also found in kidney, white adipose tissue, lung and spleen.

AMP/ATP-binding subunit of AMP-activated protein kinase (AMPK), an energy sensor protein kinase that plays a key role in regulating cellular energy metabolism. In response to reduction of intracellular ATP levels, AMPK activates energy-producing pathways and inhibits energy-consuming processes: inhibits protein, carbohydrate and lipid biosynthesis, as well as cell growth and proliferation. AMPK acts via direct phosphorylation of metabolic enzymes, and by longer-term effects via phosphorylation of transcription regulators. Also acts as a regulator of cellular polarity by remodeling the actin cytoskeleton; probably by indirectly activating myosin. Gamma non-catalytic subunit mediates binding to AMP, ADP and ATP, leading to activate or inhibit AMPK: AMP-binding results in allosteric activation of alpha catalytic subunit (PRKAA1 or PRKAA2) both by inducing phosphorylation and preventing dephosphorylation of catalytic subunits. ADP also stimulates phosphorylation, without stimulating already phosphorylated catalytic subunit. ATP promotes dephosphorylation of catalytic subunit, rendering the AMPK enzyme inactive. The protein is 5'-AMP-activated protein kinase subunit gamma-1 (Prkag1) of Rattus norvegicus (Rat).